Consider the following 271-residue polypeptide: Short-chain dehydrogenase PC-15 (271 aa).

Residues Ile-8, Thr-34, Lys-40, Asp-56, Asn-84, Tyr-148, Lys-152, Val-181, and Thr-183 each coordinate NADP(+). Residue Tyr-148 is the Proton acceptor of the active site. Catalysis depends on Lys-152, which acts as the Lowers pKa of active site Tyr.

Belongs to the short-chain dehydrogenases/reductases (SDR) family.

Its pathway is secondary metabolite biosynthesis. Functionally, short-chain dehydrogenase; part of the gene cluster that mediates the biosynthesis of the indole diterpenes penitrems. The geranylgeranyl diphosphate (GGPP) synthase penG catalyzes the first step in penitrem biosynthesis via conversion of farnesyl pyrophosphate and isopentyl pyrophosphate into geranylgeranyl pyrophosphate (GGPP). Condensation of indole-3-glycerol phosphate with GGPP by the prenyl transferase penC then forms 3-geranylgeranylindole (3-GGI). Epoxidation by the FAD-dependent monooxygenase penM leads to a epoxidized-GGI that is substrate of the terpene cyclase penB for cyclization to yield paspaline. Paspaline is subsequently converted to 13-desoxypaxilline by the cytochrome P450 monooxygenase penP, the latter being then converted to paxilline by the cytochrome P450 monooxygenase penQ. Paxilline is converted to beta-paxitriol via C-10 ketoreduction by the short-chain dehydrogenase PC-15 which can be monoprenylated at the C-20 by the indole diterpene prenyltransferase penD. A two-step elimination (acetylation and elimination) process performed by the O-acetyltransferase PC-16 and the P.simplicissimum ptmI-ortholog not yet identified in P.crustosum, leads to the production of the prenylated form of penijanthine. The FAD-linked oxidoreductase ptmO then converts the prenylated form of penijanthine into PC-M5 which is in turn transformed into PC-M4 by the aromatic dimethylallyltransferase PC-22. A series of oxidation steps involving 4 cytochrome P450 monooxygenases (PC-21, PC-05, PC-23, PC-20) and a FAD-dependent monooxygenase (PC-14) are required for the transformation of PC-M4 to penitrems A and E. Synthesis of these final products is proposed to proceed via penitrems D and C (PC-21, PC-05, PC-14) and penitrems B and F (PC-21, PC-05, PC-14, PC-23). In Penicillium crustosum (Blue mold fungus), this protein is Short-chain dehydrogenase PC-15.